The primary structure comprises 607 residues: Nexilin (607 aa).

Residues 1-14 (MNDVSQKAEIKEML) are compositionally biased toward basic and acidic residues. Disordered regions lie at residues 1–143 (MNDV…EDKM) and 165–268 (ETEA…RRRI). Ser16 carries the post-translational modification Phosphoserine. 4 stretches are compositionally biased toward basic and acidic residues: residues 40-85 (GKFD…RAEQ), 120-143 (KTKD…EDKM), 167-221 (EAKK…HMVN), and 228-268 (DRET…RRRI). Ser172 bears the Phosphoserine mark. 3 positions are modified to phosphoserine: Ser281, Ser288, and Ser296. Phosphothreonine is present on Thr301. Disordered regions lie at residues 419-444 (NFHE…KVNM) and 480-514 (AALQ…GAPW). Phosphoserine is present on residues Ser495 and Ser500. Thr502 is modified (phosphothreonine). The region spanning 513 to 601 (PWFKKPLRNT…GSAASTCILT (89 aa)) is the Ig-like domain.

Interacts with F-actin.

Its subcellular location is the cytoplasm. It localises to the cytoskeleton. The protein localises to the cell junction. It is found in the adherens junction. The protein resides in the myofibril. Its subcellular location is the sarcomere. It localises to the z line. In terms of biological role, involved in regulating cell migration through association with the actin cytoskeleton. Has an essential role in the maintenance of Z line and sarcomere integrity. This is Nexilin from Mus musculus (Mouse).